The primary structure comprises 198 residues: Guanylate kinase (198 aa).

Residues 6–192 (KSIVIFTGPS…AAQEIREILH (187 aa)) enclose the Guanylate kinase-like domain. Residue 13–20 (GPSGVGKG) participates in ATP binding.

Belongs to the guanylate kinase family.

It is found in the cytoplasm. It carries out the reaction GMP + ATP = GDP + ADP. Essential for recycling GMP and indirectly, cGMP. This is Guanylate kinase from Mycoplasmopsis synoviae (strain 53) (Mycoplasma synoviae).